We begin with the raw amino-acid sequence, 388 residues long: Diacylglycerol O-acyltransferase 2 (388 aa).

The Cytoplasmic segment spans residues 1–69 (MKTLIAAYSG…NRSKVEKQLQ (69 aa)). The tract at residues 16–40 (RQAEADRSQRSHGGPALSREGSGRW) is disordered. The chain crosses the membrane as a helical span at residues 70 to 88 (VISVLQWVLSFLVLGVACS). Residues 89–92 (AILM) lie on the Lumenal side of the membrane. The helical transmembrane segment at 93–112 (YIFCTDCWLIAVLYFTWLVF) threads the bilayer. The Cytoplasmic portion of the chain corresponds to 113–388 (DWNTPKKGGR…LPETEVLEVN (276 aa)).

This sequence belongs to the diacylglycerol acyltransferase family. As to quaternary structure, forms multimeric complexes consisting of several DGAT2 subunits. Interacts with SLC27A1 and this interaction is enhanced in the presence of ZFYVE1. As to expression, predominantly expressed in liver and white adipose tissue. Expressed at lower level in mammary gland, testis and peripheral blood leukocytes. Expressed in sebaceous glands of normal skin but decreased psoriatic skin.

It is found in the endoplasmic reticulum membrane. Its subcellular location is the lipid droplet. It localises to the cytoplasm. The protein localises to the perinuclear region. The catalysed reaction is an acyl-CoA + a 1,2-diacyl-sn-glycerol = a triacyl-sn-glycerol + CoA. The enzyme catalyses all-trans-retinol + an acyl-CoA = an all-trans-retinyl ester + CoA. It catalyses the reaction 2-(9Z-octadecenoyl)-glycerol + (9Z)-octadecenoyl-CoA = 1,2-di-(9Z-octadecenoyl)-sn-glycerol + CoA. It carries out the reaction 1,2-di-(9Z-octadecenoyl)-sn-glycerol + (9Z)-octadecenoyl-CoA = 1,2,3-tri-(9Z-octadecenoyl)-glycerol + CoA. The catalysed reaction is all-trans-retinol + hexadecanoyl-CoA = all-trans-retinyl hexadecanoate + CoA. The enzyme catalyses 1-O-(9Z-octadecenyl)-glycerol + (9Z)-octadecenoyl-CoA = 1-O-(9Z-octadecyl)-3-(9Z-octadecenoyl)-glycerol + CoA. It catalyses the reaction 1-(9Z-octadecenoyl)-glycerol + (9Z)-octadecenoyl-CoA = 1,2-di-(9Z-octadecenoyl)-glycerol + CoA. It carries out the reaction 1,2-di-(9Z-octadecenoyl)-sn-glycerol + hexadecanoyl-CoA = 1,2-di-(9Z)-octadecenoyl-3-hexadecanoyl-sn-glycerol + CoA. The catalysed reaction is 1,3-di-(9Z-octadecenoyl)-glycerol + (9Z)-octadecenoyl-CoA = 1,2,3-tri-(9Z-octadecenoyl)-glycerol + CoA. The enzyme catalyses 2,3-di-(9Z)-octadecenoyl-sn-glycerol + (9Z)-octadecenoyl-CoA = 1,2,3-tri-(9Z-octadecenoyl)-glycerol + CoA. It catalyses the reaction 2-(9Z-octadecenoyl)-glycerol + hexadecanoyl-CoA = 1-hexadecanoyl-2-(9Z-octadecenoyl)-sn-glycerol + CoA. It functions in the pathway glycerolipid metabolism; triacylglycerol biosynthesis. Inhibited by niacin. Essential acyltransferase that catalyzes the terminal and only committed step in triacylglycerol synthesis by using diacylglycerol and fatty acyl CoA as substrates. Required for synthesis and storage of intracellular triglycerides. Probably plays a central role in cytosolic lipid accumulation. In liver, is primarily responsible for incorporating endogenously synthesized fatty acids into triglycerides. Also functions as an acyl-CoA retinol acyltransferase (ARAT). Also able to use 1-monoalkylglycerol (1-MAkG) as an acyl acceptor for the synthesis of monoalkyl-monoacylglycerol (MAMAG). The protein is Diacylglycerol O-acyltransferase 2 of Homo sapiens (Human).